Reading from the N-terminus, the 586-residue chain is Glutamine--tRNA ligase (586 aa).

A 'HIGH' region motif is present at residues 58 to 68 (PEPNGYLHIGH). ATP is bound by residues 59-61 (EPN) and 65-71 (HIGHAKS). Residues Asp91 and Tyr240 each coordinate L-glutamine. ATP-binding positions include Thr259 and 294-295 (RL). The short motif at 301 to 305 (VTSKR) is the 'KMSKS' region element.

Belongs to the class-I aminoacyl-tRNA synthetase family. As to quaternary structure, monomer.

It is found in the cytoplasm. It carries out the reaction tRNA(Gln) + L-glutamine + ATP = L-glutaminyl-tRNA(Gln) + AMP + diphosphate. This is Glutamine--tRNA ligase from Bordetella avium (strain 197N).